A 434-amino-acid polypeptide reads, in one-letter code: MNKNKISIVILAAGKGSRMKSSKAKVLHPICGKEMLYYIIKTSRAISDDVSVVVAHQRDAVVESMSRYFNDINFVTQDAINFPGTGGAMKGVNIKNERVLVLNGDMPLVEKSSLDGFLEAQGDVVMSIFNLQNPSGYGRVIIEDAEVKKIVEQKDATLQELKVQSVNAGIYAFSKKIIEKYIPLLQNNNAQEEYYLTDIISMARNDGIKITPLLVNENEYKGVNSKKDLSDAEIIMQDKIKNSLMESGVTMQLPSTIYIEEGVVFEGECIVENGCRITGESKIINSHIKAHSVIEDSIVKNSDVGPLAHLRPASNIEDTHIGNFVEIKKSTLKGVKAGHLSYIGDATVDEGTNIGAGVITCNYDGINKYKTVIGKNVFIGSDSQLIAPVVIEDNVMIAAGTTLRSGKVNSGELVVSASKSRIIKDFYYKFFAKK.

Positions 1 to 226 are pyrophosphorylase; it reads MNKNKISIVI…ENEYKGVNSK (226 aa). UDP-N-acetyl-alpha-D-glucosamine contacts are provided by residues 11–14, Lys25, Gln77, and 84–85; these read LAAG and GT. Asp105 contributes to the Mg(2+) binding site. Positions 138, 152, 167, and 224 each coordinate UDP-N-acetyl-alpha-D-glucosamine. Asn224 serves as a coordination point for Mg(2+). The linker stretch occupies residues 227 to 247; that stretch reads KDLSDAEIIMQDKIKNSLMES. The tract at residues 248–434 is N-acetyltransferase; the sequence is GVTMQLPSTI…DFYYKFFAKK (187 aa). 2 residues coordinate UDP-N-acetyl-alpha-D-glucosamine: Arg311 and Lys328. The active-site Proton acceptor is the His339. Tyr342 and Asn353 together coordinate UDP-N-acetyl-alpha-D-glucosamine. Acetyl-CoA is bound by residues Ala356, 362 to 363, Ser381, and Ala399; that span reads NY.

The protein in the N-terminal section; belongs to the N-acetylglucosamine-1-phosphate uridyltransferase family. This sequence in the C-terminal section; belongs to the transferase hexapeptide repeat family. Homotrimer. Mg(2+) is required as a cofactor.

It localises to the cytoplasm. The enzyme catalyses alpha-D-glucosamine 1-phosphate + acetyl-CoA = N-acetyl-alpha-D-glucosamine 1-phosphate + CoA + H(+). It carries out the reaction N-acetyl-alpha-D-glucosamine 1-phosphate + UTP + H(+) = UDP-N-acetyl-alpha-D-glucosamine + diphosphate. The protein operates within nucleotide-sugar biosynthesis; UDP-N-acetyl-alpha-D-glucosamine biosynthesis; N-acetyl-alpha-D-glucosamine 1-phosphate from alpha-D-glucosamine 6-phosphate (route II): step 2/2. It functions in the pathway nucleotide-sugar biosynthesis; UDP-N-acetyl-alpha-D-glucosamine biosynthesis; UDP-N-acetyl-alpha-D-glucosamine from N-acetyl-alpha-D-glucosamine 1-phosphate: step 1/1. Its pathway is bacterial outer membrane biogenesis; LPS lipid A biosynthesis. Functionally, catalyzes the last two sequential reactions in the de novo biosynthetic pathway for UDP-N-acetylglucosamine (UDP-GlcNAc). The C-terminal domain catalyzes the transfer of acetyl group from acetyl coenzyme A to glucosamine-1-phosphate (GlcN-1-P) to produce N-acetylglucosamine-1-phosphate (GlcNAc-1-P), which is converted into UDP-GlcNAc by the transfer of uridine 5-monophosphate (from uridine 5-triphosphate), a reaction catalyzed by the N-terminal domain. In Sulfurimonas denitrificans (strain ATCC 33889 / DSM 1251) (Thiomicrospira denitrificans (strain ATCC 33889 / DSM 1251)), this protein is Bifunctional protein GlmU.